Reading from the N-terminus, the 456-residue chain is UDP-N-acetylmuramate--L-alanine ligase (456 aa).

Residue 112-118 (GAHGKTS) coordinates ATP.

This sequence belongs to the MurCDEF family.

It localises to the cytoplasm. The enzyme catalyses UDP-N-acetyl-alpha-D-muramate + L-alanine + ATP = UDP-N-acetyl-alpha-D-muramoyl-L-alanine + ADP + phosphate + H(+). It participates in cell wall biogenesis; peptidoglycan biosynthesis. Its function is as follows. Cell wall formation. In Desulforapulum autotrophicum (strain ATCC 43914 / DSM 3382 / VKM B-1955 / HRM2) (Desulfobacterium autotrophicum), this protein is UDP-N-acetylmuramate--L-alanine ligase.